The chain runs to 910 residues: Valine--tRNA ligase (910 aa).

The 'HIGH' region motif lies at 45 to 55 (PNVTGSLHMGH). Positions 554-558 (KMSKS) match the 'KMSKS' region motif. ATP is bound at residue lysine 557. The stretch at 842–910 (DLQAEAARLA…TAESRIRDAS (69 aa)) forms a coiled coil.

The protein belongs to the class-I aminoacyl-tRNA synthetase family. ValS type 1 subfamily. In terms of assembly, monomer.

The protein resides in the cytoplasm. The enzyme catalyses tRNA(Val) + L-valine + ATP = L-valyl-tRNA(Val) + AMP + diphosphate. Catalyzes the attachment of valine to tRNA(Val). As ValRS can inadvertently accommodate and process structurally similar amino acids such as threonine, to avoid such errors, it has a 'posttransfer' editing activity that hydrolyzes mischarged Thr-tRNA(Val) in a tRNA-dependent manner. The polypeptide is Valine--tRNA ligase (Brucella melitensis biotype 1 (strain ATCC 23456 / CCUG 17765 / NCTC 10094 / 16M)).